A 452-amino-acid polypeptide reads, in one-letter code: MLINDTVVAPATNISTQAIALIRVSGSEAFLIVNKLIKDKKLEEKRGLFLRKLYFEDELIDEVVLSCFVAPNSFTGENVVEIACHGGILNTNKIINILIQSGARMALRGEFSQRSFLNGKIDLIQAEGINNLIHAKNELALKIGVANMSGSNNKAIIELKDNLLDIISRIQVSIDYPDYDDVEGSSIEDLTNLLEIINDQINKLLMRSKMAFKNSEGIKTAIIGQTNVGKSSILNALINEDKAIVTDIPGTTRDIVEGQINLENVSLNLIDTAGIRKTSDVVENLGILKSKNLINEADLVLFVVNKENINDLDNQEIFELLKNKTYILIVNKAEKLSKTEKQNLEKKYQNIVFTSAINHDIDQLVLRINQMYLNEEINKNDELILIGLNQITLVEQIKNKLSTALSIIKSGMPIDIVNVDLYDAWNLLNELIGVEYEDEIIDNIFRKYCLGK.

3 residues coordinate (6S)-5-formyl-5,6,7,8-tetrahydrofolate: Arg23, Glu81, and Lys120. One can recognise a TrmE-type G domain in the interval 217–373 (GIKTAIIGQT…LVLRINQMYL (157 aa)). Asn227 lines the K(+) pocket. Residues 227–232 (NVGKSS), 246–252 (TDIPGTT), and 271–274 (DTAG) each bind GTP. Ser231 contributes to the Mg(2+) binding site. K(+) contacts are provided by Thr246, Ile248, and Thr251. Thr252 contacts Mg(2+). Residue Lys452 participates in (6S)-5-formyl-5,6,7,8-tetrahydrofolate binding.

Belongs to the TRAFAC class TrmE-Era-EngA-EngB-Septin-like GTPase superfamily. TrmE GTPase family. Homodimer. Heterotetramer of two MnmE and two MnmG subunits. K(+) serves as cofactor.

The protein localises to the cytoplasm. In terms of biological role, exhibits a very high intrinsic GTPase hydrolysis rate. Involved in the addition of a carboxymethylaminomethyl (cmnm) group at the wobble position (U34) of certain tRNAs, forming tRNA-cmnm(5)s(2)U34. The protein is tRNA modification GTPase MnmE of Mycoplasma mycoides subsp. mycoides SC (strain CCUG 32753 / NCTC 10114 / PG1).